The sequence spans 118 residues: MTSEVQVEVAMPIYFSDSAANKVKGLIAEEENPNMKLRVYVTGGGCSGFSYGFTFAETANEDDTKIENAGVTLLVDPMSLQYLVGGTVDYTNGLEGSRFFVNNPNATATCGCGSSFSM.

The iron-sulfur cluster site is built by C46, C110, and C112.

It belongs to the HesB/IscA family. Homodimer. Iron-sulfur cluster is required as a cofactor.

Its function is as follows. Required for insertion of 4Fe-4S clusters for at least IspG. This is Iron-sulfur cluster insertion protein ErpA from Psychromonas ingrahamii (strain DSM 17664 / CCUG 51855 / 37).